The chain runs to 152 residues: MKSCKPSGPPAGARVAPPCAGGTECAGTCAGAGRLESAARRRLAANARERRRMQGLNTAFDRLRRVVPQWGQDKKLSKYETLQMALSYIMALTRILAEAERFGSERDWVGLHCEHFGRDHYLPFPGAKLPGESELYSQRLFGFQPEPFQMAT.

The bHLH domain occupies 40 to 92 (RRRLAANARERRRMQGLNTAFDRLRRVVPQWGQDKKLSKYETLQMALSYIMAL).

As to quaternary structure, forms a heterodimer with TCF3 isoform E47; interaction may be required for DNA-binding in certain situations.

The protein localises to the nucleus. Its subcellular location is the perikaryon. It is found in the cell projection. It localises to the axon. Transcription factor that binds to DNA at the consensus sequence 5'-CAG[GC]TG-3'. Dimerization with TCF3 isoform E47 may be required in certain situations. Binds to gene promoters and enhancer elements, and thereby regulates a transcriptional program of retinal ganglion cell (RGC) determinant genes. Although the exact mechanism is not certain, retinal transcription regulation by ATOH7 has a role in RGC determination and survival, photoreceptor population development, targeting of RGC axons to the optic nerve and development of the retino-hypothalamic tract. Binds to its own promoter and enhancer sequences, suggesting autoregulation of ATOH7 transcription. Required for retinal circadian rhythm photoentrainment. Plays a role in brainstem auditory signaling and binaural processing. This Homo sapiens (Human) protein is Transcription factor ATOH7.